We begin with the raw amino-acid sequence, 183 residues long: 2-C-methyl-D-erythritol 2,4-cyclodiphosphate synthase (183 aa).

The a divalent metal cation site is built by D10 and H12. 4-CDP-2-C-methyl-D-erythritol 2-phosphate contacts are provided by residues 10 to 12 (DVH) and 38 to 39 (HS). A divalent metal cation is bound at residue H46. 4-CDP-2-C-methyl-D-erythritol 2-phosphate is bound by residues 60–62 (DIG) and 65–69 (FPDTD).

The protein belongs to the IspF family. Homotrimer. It depends on a divalent metal cation as a cofactor.

It catalyses the reaction 4-CDP-2-C-methyl-D-erythritol 2-phosphate = 2-C-methyl-D-erythritol 2,4-cyclic diphosphate + CMP. The protein operates within isoprenoid biosynthesis; isopentenyl diphosphate biosynthesis via DXP pathway; isopentenyl diphosphate from 1-deoxy-D-xylulose 5-phosphate: step 4/6. In terms of biological role, involved in the biosynthesis of isopentenyl diphosphate (IPP) and dimethylallyl diphosphate (DMAPP), two major building blocks of isoprenoid compounds. Catalyzes the conversion of 4-diphosphocytidyl-2-C-methyl-D-erythritol 2-phosphate (CDP-ME2P) to 2-C-methyl-D-erythritol 2,4-cyclodiphosphate (ME-CPP) with a corresponding release of cytidine 5-monophosphate (CMP). The sequence is that of 2-C-methyl-D-erythritol 2,4-cyclodiphosphate synthase from Verminephrobacter eiseniae (strain EF01-2).